Here is a 949-residue protein sequence, read N- to C-terminus: MAM domain-containing glycosylphosphatidylinositol anchor protein 2 (949 aa).

The N-terminal stretch at 1–25 (MDLVYGLVWLLTVLLEGISGQGVYA) is a signal peptide. 2 consecutive Ig-like domains span residues 27-127 (PTVR…IRVD) and 134-232 (PVVT…KMVS). Disulfide bonds link cysteine 62–cysteine 110 and cysteine 159–cysteine 216. Asparagine 92, asparagine 213, and asparagine 237 each carry an N-linked (GlcNAc...) asparagine glycan. 4 Ig-like domains span residues 242–328 (PSIK…NIIV), 340–436 (PDPY…VNIS), 442–533 (PNLT…ALVQ), and 540–627 (PAVE…FLVT). 2 disulfide bridges follow: cysteine 264/cysteine 310 and cysteine 359/cysteine 417. N-linked (GlcNAc...) asparagine glycans are attached at residues asparagine 434, asparagine 443, asparagine 504, asparagine 610, and asparagine 703. 2 disulfide bridges follow: cysteine 465–cysteine 515 and cysteine 561–cysteine 611. The 101-residue stretch at 638 to 738 (DTYNPVWQNR…TIRVIKYTGE (101 aa)) folds into the Fibronectin type-III domain. Residues 739-914 (FHCGFEDGNI…VSIAEGECAK (176 aa)) enclose the MAM domain. Residue aspartate 924 is the site of GPI-anchor amidated aspartate attachment. A propeptide spans 925–949 (GAVGILVHIWLFPVIILISILSPRR) (removed in mature form).

Interacts (through the Ig-like domains) with NLGN2.

It localises to the cell membrane. In terms of biological role, may be involved in cell-cell interactions. The chain is MAM domain-containing glycosylphosphatidylinositol anchor protein 2 (Mdga2) from Mus musculus (Mouse).